The primary structure comprises 217 residues: NAD(P)H-hydrate epimerase (217 aa).

The YjeF N-terminal domain maps to 1 to 217 (MRAIENAAMA…VAVADIGLSS (217 aa)). 48-52 (NNGGD) lines the (6S)-NADPHX pocket. K(+)-binding residues include N49 and D127. Residues 131 to 137 (GIGQTRP) and D165 each bind (6S)-NADPHX. Position 168 (T168) interacts with K(+).

It belongs to the NnrE/AIBP family. Requires K(+) as cofactor.

It catalyses the reaction (6R)-NADHX = (6S)-NADHX. It carries out the reaction (6R)-NADPHX = (6S)-NADPHX. In terms of biological role, catalyzes the epimerization of the S- and R-forms of NAD(P)HX, a damaged form of NAD(P)H that is a result of enzymatic or heat-dependent hydration. This is a prerequisite for the S-specific NAD(P)H-hydrate dehydratase to allow the repair of both epimers of NAD(P)HX. The sequence is that of NAD(P)H-hydrate epimerase from Cereibacter sphaeroides (strain KD131 / KCTC 12085) (Rhodobacter sphaeroides).